We begin with the raw amino-acid sequence, 112 residues long: Colipase (112 aa).

A signal peptide spans 1-17; that stretch reads MKVLVVLLVTLVAVAYA. Positions 18-22 are cleaved as a propeptide — enterostatin, activation peptide; sequence APGPR. 5 disulfide bridges follow: cysteine 34–cysteine 45, cysteine 40–cysteine 56, cysteine 44–cysteine 78, cysteine 66–cysteine 86, and cysteine 80–cysteine 104.

This sequence belongs to the colipase family. In terms of assembly, forms a 1:1 stoichiometric complex with pancreatic lipase. In terms of tissue distribution, expressed by the pancreas.

It is found in the secreted. Its function is as follows. Colipase is a cofactor of pancreatic lipase. It allows the lipase to anchor itself to the lipid-water interface. Without colipase the enzyme is washed off by bile salts, which have an inhibitory effect on the lipase. Enterostatin has a biological activity as a satiety signal. The sequence is that of Colipase from Rattus norvegicus (Rat).